The primary structure comprises 483 residues: Protein nucleotidyltransferase YdiU (483 aa).

Residues Gly87, Gly89, Arg90, Lys110, Asp122, Gly123, Arg173, and Arg180 each coordinate ATP. The active-site Proton acceptor is Asp249. Residues Asn250 and Asp259 each coordinate Mg(2+). Position 259 (Asp259) interacts with ATP.

It belongs to the SELO family. Mg(2+) is required as a cofactor. Requires Mn(2+) as cofactor.

It catalyses the reaction L-seryl-[protein] + ATP = 3-O-(5'-adenylyl)-L-seryl-[protein] + diphosphate. The catalysed reaction is L-threonyl-[protein] + ATP = 3-O-(5'-adenylyl)-L-threonyl-[protein] + diphosphate. It carries out the reaction L-tyrosyl-[protein] + ATP = O-(5'-adenylyl)-L-tyrosyl-[protein] + diphosphate. The enzyme catalyses L-histidyl-[protein] + UTP = N(tele)-(5'-uridylyl)-L-histidyl-[protein] + diphosphate. It catalyses the reaction L-seryl-[protein] + UTP = O-(5'-uridylyl)-L-seryl-[protein] + diphosphate. The catalysed reaction is L-tyrosyl-[protein] + UTP = O-(5'-uridylyl)-L-tyrosyl-[protein] + diphosphate. Its function is as follows. Nucleotidyltransferase involved in the post-translational modification of proteins. It can catalyze the addition of adenosine monophosphate (AMP) or uridine monophosphate (UMP) to a protein, resulting in modifications known as AMPylation and UMPylation. The protein is Protein nucleotidyltransferase YdiU of Pectobacterium carotovorum subsp. carotovorum (strain PC1).